The primary structure comprises 143 residues: Midkine (143 aa).

The N-terminal stretch at 1–20 (MQHRGFLLLTLLALLALTSA) is a signal peptide. 5 disulfide bridges follow: Cys-37-Cys-61, Cys-45-Cys-70, Cys-52-Cys-74, Cys-84-Cys-116, and Cys-94-Cys-126.

The protein belongs to the pleiotrophin family. Homodimer. Interacts with ALK. Interacts with LRP1; promotes neuronal survival. Interacts with LRP2. Interacts with NCAM1. Interacts (via C-terminal) with PTPRZ1 (via chondroitin sulfate chains); this interaction is inhibited by PTN; this interaction promotes neuronal migration. Interacts with NCL; this interaction promotes NCL clustering and lateral movements of this complex into lipid rafts leading to MDK internalization. Interacts with LRP6 and LRP8: this interaction is calcium dependent. Interacts with ITGA4. Interacts with ITGA6. Interacts with ITGB1. Interacts with ITGA4:ITGB1 complex; this interaction mediates MDK-induced osteoblast cells migration through PXN phosphorylation. Interacts with ITGA6:ITGB1 complex; this interaction mediates MDK-induced neurite outgrowth. Interacts with NOTCH2; this interaction mediates a nuclear accumulation of NOTCH2 and therefore activation of NOTCH2 signaling leading to interaction between HES1 and STAT3. Interacts with GPC2 (via heparan sulfate chain); this interaction is inhibited by heparin followed by chondroitin sulfate E; this interaction induces GPC2 clustering through heparan sulfate chain; this interaction induces neuronal cell adhesion and neurite outgrowth. Interacts with SDC3; this interaction induces SDC3 clustering; this interaction induces neuronal cell adhesion and neurite outgrowth. Interacts with SDC1. Interacts with CSPG5; this interaction promotes elongation of oligodendroglial precursor-like cells. As to expression, expressed in various tumor cell lines. In insulinoma tissue predominantly expressed in precancerous lesions.

It is found in the secreted. Secreted protein that functions as a cytokine and growth factor and mediates its signal through cell-surface proteoglycan and non-proteoglycan receptors. Binds cell-surface proteoglycan receptors via their chondroitin sulfate (CS) groups. Thereby regulates many processes like inflammatory response, cell proliferation, cell adhesion, cell growth, cell survival, tissue regeneration, cell differentiation and cell migration. Participates in inflammatory processes by exerting two different activities. Firstly, mediates neutrophils and macrophages recruitment to the sites of inflammation both by direct action by cooperating namely with ITGB2 via LRP1 and by inducing chemokine expression. This inflammation can be accompanied by epithelial cell survival and smooth muscle cell migration after renal and vessel damage, respectively. Secondly, suppresses the development of tolerogenic dendric cells thereby inhibiting the differentiation of regulatory T cells and also promote T cell expansion through NFAT signaling and Th1 cell differentiation. Promotes tissue regeneration after injury or trauma. After heart damage negatively regulates the recruitment of inflammatory cells and mediates cell survival through activation of anti-apoptotic signaling pathways via MAPKs and AKT pathways through the activation of angiogenesis. Also facilitates liver regeneration as well as bone repair by recruiting macrophage at trauma site and by promoting cartilage development by facilitating chondrocyte differentiation. Plays a role in brain by promoting neural precursor cells survival and growth through interaction with heparan sulfate proteoglycans. Binds PTPRZ1 and promotes neuronal migration and embryonic neurons survival. Binds SDC3 or GPC2 and mediates neurite outgrowth and cell adhesion. Binds chondroitin sulfate E and heparin leading to inhibition of neuronal cell adhesion induced by binding with GPC2. Binds CSPG5 and promotes elongation of oligodendroglial precursor-like cells. Also binds ITGA6:ITGB1 complex; this interaction mediates MDK-induced neurite outgrowth. Binds LRP1; promotes neuronal survival. Binds ITGA4:ITGB1 complex; this interaction mediates MDK-induced osteoblast cells migration through PXN phosphorylation. Binds anaplastic lymphoma kinase (ALK) which induces ALK activation and subsequent phosphorylation of the insulin receptor substrate (IRS1), followed by the activation of mitogen-activated protein kinase (MAPK) and PI3-kinase, and the induction of cell proliferation. Promotes epithelial to mesenchymal transition through interaction with NOTCH2. During arteriogenesis, plays a role in vascular endothelial cell proliferation by inducing VEGFA expression and release which in turn induces nitric oxide synthase expression. Moreover activates vasodilation through nitric oxide synthase activation. Negatively regulates bone formation in response to mechanical load by inhibiting Wnt/beta-catenin signaling in osteoblasts. In addition plays a role in hippocampal development, working memory, auditory response, early fetal adrenal gland development and the female reproductive system. This is Midkine from Homo sapiens (Human).